Reading from the N-terminus, the 425-residue chain is MATEKPHINLAVIGHIDHGKSTTVGRLMYEAGAVPAHIIEQYKKEAESKGKGSFAFAWVMDNLKEERERGITIDIAHKRFDTDKYYFTVVDCPGHRDFVKNMITGASQADAAVIVVAAPDGVMEQTKEHVFLSKTLGIKQLIVAVNKMDAANYDEARFNQVKSDVGALLKMVGTNPDTVKFIPISAFEGDNITKNSDKMPWYKGKTLFGLLDELEVPDKPTEKPLRVPIQDAYSISGIGTVPVGRVETGILKKGMNVTFMPANKSGEVKSIEMHHEEIPQAVPGDNIGFNVRGIGKDDVRRGDVCGASDNPPAVAEEFTAQIVVLQHPSAITVGYTPVFHCHTAQTACTFTELVKKLDPRTGQTLEENPTFLKAGDAAIIKCHPTKPLCLENAKEFPQLGRFAIRDMGQTIAAGMCINVVKKQMR.

Positions 5–221 (KPHINLAVIG…DELEVPDKPT (217 aa)) constitute a tr-type G domain. Residues 14-21 (GHIDHGKS) form a G1 region. Position 14 to 21 (14 to 21 (GHIDHGKS)) interacts with GTP. A Mg(2+)-binding site is contributed by S21. The tract at residues 70-74 (GITID) is G2. Residues 91–94 (DCPG) are G3. Residues 91-95 (DCPGH) and 146-149 (NKMD) contribute to the GTP site. The tract at residues 146 to 149 (NKMD) is G4. Positions 185–187 (SAF) are G5.

Belongs to the TRAFAC class translation factor GTPase superfamily. Classic translation factor GTPase family. EF-Tu/EF-1A subfamily.

The protein resides in the cytoplasm. It catalyses the reaction GTP + H2O = GDP + phosphate + H(+). Functionally, GTP hydrolase that promotes the GTP-dependent binding of aminoacyl-tRNA to the A-site of ribosomes during protein biosynthesis. This is Elongation factor 1-alpha from Methanospirillum hungatei JF-1 (strain ATCC 27890 / DSM 864 / NBRC 100397 / JF-1).